Reading from the N-terminus, the 295-residue chain is 4-hydroxybenzoate octaprenyltransferase (295 aa).

8 helical membrane passes run 28-48, 55-75, 103-123, 147-167, 175-195, 219-239, 241-261, and 275-295; these read PIGIYLLLWPTLWAVWIAADG, VLIFTCGVILMRSAGCVINDF, WALFAVLVALSFGLVLLTDPF, LPQLVLGAAYSWGIPMAFTAA, AWLIFAANLAWTVAYDTYYAM, AIILALQGLTLGLLLVVGMRL, LGPYFHLGLLVAALCFAWEFV, and FLHNHWAGLAILVGLILDYGI.

It belongs to the UbiA prenyltransferase family. The cofactor is Mg(2+).

The protein resides in the cell inner membrane. The enzyme catalyses all-trans-octaprenyl diphosphate + 4-hydroxybenzoate = 4-hydroxy-3-(all-trans-octaprenyl)benzoate + diphosphate. The protein operates within cofactor biosynthesis; ubiquinone biosynthesis. Its function is as follows. Catalyzes the prenylation of para-hydroxybenzoate (PHB) with an all-trans polyprenyl group. Mediates the second step in the final reaction sequence of ubiquinone-8 (UQ-8) biosynthesis, which is the condensation of the polyisoprenoid side chain with PHB, generating the first membrane-bound Q intermediate 3-octaprenyl-4-hydroxybenzoate. The polypeptide is 4-hydroxybenzoate octaprenyltransferase (Azotobacter vinelandii (strain DJ / ATCC BAA-1303)).